The primary structure comprises 630 residues: Tyrosinase (630 aa).

Cu cation contacts are provided by histidine 69, histidine 92, histidine 101, histidine 317, histidine 321, and histidine 360. The 2'-(S-cysteinyl)-histidine (Cys-His) cross-link spans 90–92; the sequence is CVH.

This sequence belongs to the tyrosinase family. Requires Cu(2+) as cofactor.

It carries out the reaction 2 L-dopa + O2 = 2 L-dopaquinone + 2 H2O. It catalyses the reaction L-tyrosine + O2 = L-dopaquinone + H2O. This is a copper-containing oxidase that functions in the formation of pigments such as melanins and other polyphenolic compounds. The polypeptide is Tyrosinase (tyr1) (Aspergillus fumigatus (strain ATCC MYA-4609 / CBS 101355 / FGSC A1100 / Af293) (Neosartorya fumigata)).